The primary structure comprises 478 residues: Amino acid oxidase imqH (478 aa).

The first 22 residues, 1 to 22 (MPAPKSIIIVGSGVFGLSTAHA), serve as a signal peptide directing secretion. The FAD site is built by Val-14, Phe-15, Asp-38, Asn-53, Ala-57, Asn-58, Arg-63, and Ile-64. N-linked (GlcNAc...) asparagine glycans are attached at residues Asn-97 and Asn-167. An FAD-binding site is contributed by Val-208. Cys-399 is subject to S-8alpha-FAD cysteine. FAD-binding residues include Phe-432 and Lys-433.

This sequence belongs to the MSOX/MTOX family. Dimer. It depends on FAD as a cofactor.

Its pathway is secondary metabolite biosynthesis. Functionally, nonribosomal peptide synthetase; part of the gene cluster that mediates the biosynthesis of imizoquins A to D, tripeptide-derived alkaloids that serve a protective role against oxidative stress that are essential for normal germination. ImqB is a canonical three-module NRPS that assembles the tripeptide backbone of the imizoquins via condensation of Trp, Tyr, and Leu-derived precursors. N-methylation by imqF and phenol oxidation by imqC, followed by cyclization via the FAD-dependent oxidase imqH carry out the three-step transformation of L-tyrosine into tetrahydroisoquinoline. Importantly, this sequence requires the presence of a free amine in the tyrosine moiety, indicating that isoquinoline formation occurs prior to peptide bond formation. The imidazolidin-4-one ring of imizoquins could form following additional oxidation of the methyl-derived bridgehead carbon by imqH. Lastly, O-methylation by imqG and leucine hydroxylation by imqE complete biosynthesis of the imizoquins. This chain is Amino acid oxidase imqH, found in Aspergillus flavus (strain ATCC 200026 / FGSC A1120 / IAM 13836 / NRRL 3357 / JCM 12722 / SRRC 167).